Consider the following 562-residue polypeptide: MENQKVPISSVPNLKDLDMISRPIANFPPSVWGDRFINYACEDENEQAQKERQVEELKEQVRRELAAAIDKPLQQLNIIDATQRLGIAYHFENEIEESLKHIYLHTYVENTCFEGSDDLCSVALWFRLLRQDGYRVSCDVFKKFRDSEGNFKNSLMEDAKGLLELYEATHLSVNGEEMLDDALEFTKTHLELVVSHLNYPLAEQVRHALYQPQHKGLPRLEAVYFFRIYEAYDSHNEALLKLAKLDFNLLQSLHMKELSHMAKWWKSLDFATKFPFARDRLVEGYFWILGVYFEPQYSLARKIIIKVFTMISTIDDIYDAYGTLDELKLFTKAIQRWDIGSLDQLPEYMKPCYKSVLDVYNEIEEEMDNQGSLFRMHYAKEEMKKIVEGYMDEAKWCHEKYVPTFQEYMSVALVTAGYTFLTTISYLGMGEIASKEAFDWLFSHPPIIEASESVGRLMDDMRSHEFEQERGHVASGIECYMKQYGVTEEEAHDKFHKRLVKAWKDINEGCLRPYPVPKPLLMRILSLTRVIDVIYKNEDWYTHVKKPMKDKIASLLIDPMIV.

3 residues coordinate Mg(2+): D315, D319, and E467. The DDXXD motif motif lies at D315–D319.

It belongs to the terpene synthase family. Tpsa subfamily. It depends on Mg(2+) as a cofactor. The cofactor is Mn(2+).

Its function is as follows. Catalyzes the formation of beta-elemol, guaiol and bulnesol. The sequence is that of Sesquiterpene synthase from Santalum spicatum (Australian sandalwood).